Reading from the N-terminus, the 115-residue chain is Ig heavy chain V-III region W3082 (115 aa).

Residues 1–114 (EVKLEESGGG…WGQGTLVTVS (114 aa)) form the Ig-like domain. Cys-22 and Cys-98 form a disulfide bridge.

In Mus musculus (Mouse), this protein is Ig heavy chain V-III region W3082.